Here is a 164-residue protein sequence, read N- to C-terminus: Crossover junction endodeoxyribonuclease RuvC (164 aa).

Active-site residues include D7, E67, and D139. Mg(2+)-binding residues include D7, E67, and D139.

The protein belongs to the RuvC family. As to quaternary structure, homodimer which binds Holliday junction (HJ) DNA. The HJ becomes 2-fold symmetrical on binding to RuvC with unstacked arms; it has a different conformation from HJ DNA in complex with RuvA. In the full resolvosome a probable DNA-RuvA(4)-RuvB(12)-RuvC(2) complex forms which resolves the HJ. It depends on Mg(2+) as a cofactor.

It localises to the cytoplasm. The enzyme catalyses Endonucleolytic cleavage at a junction such as a reciprocal single-stranded crossover between two homologous DNA duplexes (Holliday junction).. The RuvA-RuvB-RuvC complex processes Holliday junction (HJ) DNA during genetic recombination and DNA repair. Endonuclease that resolves HJ intermediates. Cleaves cruciform DNA by making single-stranded nicks across the HJ at symmetrical positions within the homologous arms, yielding a 5'-phosphate and a 3'-hydroxyl group; requires a central core of homology in the junction. The consensus cleavage sequence is 5'-(A/T)TT(C/G)-3'. Cleavage occurs on the 3'-side of the TT dinucleotide at the point of strand exchange. HJ branch migration catalyzed by RuvA-RuvB allows RuvC to scan DNA until it finds its consensus sequence, where it cleaves and resolves the cruciform DNA. This chain is Crossover junction endodeoxyribonuclease RuvC, found in Geobacter sp. (strain M21).